Consider the following 114-residue polypeptide: MEMVSKIACFVLLCMVVVAPHAEALTCGQVTAGLAPCLPYLQGRGPLGGCCGGVKGLLGSAKTTADRKTACTCLKSAANAIKGIDLNKAAGIPSVCKVNIPYKISPSTDCSTVQ.

Residues M1–E23 form the signal peptide. 4 cysteine pairs are disulfide-bonded: C27/C73, C37/C50, C51/C96, and C71/C110.

This sequence belongs to the plant LTP family.

Functionally, plant non-specific lipid-transfer proteins transfer phospholipids as well as galactolipids across membranes. May play a role in wax or cutin deposition in the cell walls of expanding epidermal cells and certain secretory tissues. This chain is Non-specific lipid-transfer protein 1 (LTP1), found in Solanum pennellii (Tomato).